Consider the following 306-residue polypeptide: D-alanine--D-alanine ligase (306 aa).

The 200-residue stretch at lysine 101–glutamate 300 folds into the ATP-grasp domain. Leucine 128 to threonine 182 serves as a coordination point for ATP. The Mg(2+) site is built by aspartate 250, glutamate 267, and asparagine 269.

This sequence belongs to the D-alanine--D-alanine ligase family. Mg(2+) is required as a cofactor. It depends on Mn(2+) as a cofactor.

The protein resides in the cytoplasm. The catalysed reaction is 2 D-alanine + ATP = D-alanyl-D-alanine + ADP + phosphate + H(+). The protein operates within cell wall biogenesis; peptidoglycan biosynthesis. Cell wall formation. The protein is D-alanine--D-alanine ligase of Azorhizobium caulinodans (strain ATCC 43989 / DSM 5975 / JCM 20966 / LMG 6465 / NBRC 14845 / NCIMB 13405 / ORS 571).